We begin with the raw amino-acid sequence, 545 residues long: ATP synthase subunit alpha (545 aa).

An ATP-binding site is contributed by 173–180 (GDRKTGKT).

It belongs to the ATPase alpha/beta chains family. As to quaternary structure, F-type ATPases have 2 components, CF(1) - the catalytic core - and CF(0) - the membrane proton channel. CF(1) has five subunits: alpha(3), beta(3), gamma(1), delta(1), epsilon(1). CF(0) has three main subunits: a(1), b(2) and c(9-12). The alpha and beta chains form an alternating ring which encloses part of the gamma chain. CF(1) is attached to CF(0) by a central stalk formed by the gamma and epsilon chains, while a peripheral stalk is formed by the delta and b chains.

Its subcellular location is the cell membrane. It catalyses the reaction ATP + H2O + 4 H(+)(in) = ADP + phosphate + 5 H(+)(out). Produces ATP from ADP in the presence of a proton gradient across the membrane. The alpha chain is a regulatory subunit. The chain is ATP synthase subunit alpha from Renibacterium salmoninarum (strain ATCC 33209 / DSM 20767 / JCM 11484 / NBRC 15589 / NCIMB 2235).